Reading from the N-terminus, the 326-residue chain is Aquaporin-3 (326 aa).

2 consecutive transmembrane segments (helical) span residues 24–44 (LAEFLGTFLLVLLLNGMIITA) and 64–84 (LAFGGGLAVMVAVLVSGGISG). Residues 88–90 (NPA) carry the NPA 1 motif. A helical membrane pass occupies residues 107-127 (LVYIFMQYMGAFFAASILYAV). N-linked (GlcNAc...) asparagine glycosylation occurs at asparagine 146. 2 consecutive transmembrane segments (helical) span residues 166–186 (IFDAILGTGLLVMGIFAIIDP) and 196–216 (IPLYVGFLISSLIFSFSYNAG). An NPA 2 motif is present at residues 220–222 (NPA). A helical transmembrane segment spans residues 247-267 (LWWLVPVIGPHVGGLLGGVTY). The N-linked (GlcNAc...) asparagine glycan is linked to asparagine 294.

Belongs to the MIP/aquaporin (TC 1.A.8) family.

The protein resides in the cell membrane. Functionally, aquaglyceroporin that may modulate the water content and osmolytes during anhydrobiosis. The sequence is that of Aquaporin-3 from Milnesium tardigradum (Water bear).